The primary structure comprises 629 residues: Leucine-rich repeat protein soc-2 homolog (629 aa).

Low complexity predominate over residues 1–19 (MNLCSSGATASTTSLSSTG). Residues 1–133 (MNLCSSGATA…PTTKKSKPIQ (133 aa)) are disordered. Over residues 21-45 (RNGGTSEGGGEGAGGGGGSGGGGGN) the composition is skewed to gly residues. LRR repeat units lie at residues 149-170 (GIKRLDLSKSSITVIPSTVKEC), 172-193 (HLTELYLYSNKIGQLPAEIGCL), 195-217 (NLRNLALNENSLTSLPESLQNCK), 218-239 (QLKVLDLRHNKLAEIPPVIYRL), 241-262 (TLTTLYLRFNRITAVADNLRQL), 264-285 (NLTMLSLRENKIRELGSAIGAL), 287-308 (NLTTLDVSHNHLEHLPEDIGNC), 310-331 (NLSALDLQHNELLDIPDSIGNL), 333-355 (SLVRLGLRYNRLSSVPATLKNCK), 356-377 (SMDEFNVEGNGMTQLPDGMLAS), 380-401 (GLTTITLSRNQFTSYPTGGPAQ), 404-425 (NVYSINLEHNRIDKIPYGIFSR), 428-449 (GLTKLNMKENMLTALPLDIGTW), 451-472 (NMVELNLATNALQKLPDDIMNL), 474-495 (NLEILILSNNMLKKIPNTIGNM), 497-518 (KLRILDLEENRIEVLPHEIGLL), 520-541 (ELQRLILQTNQITMLPRSIGHL), 543-564 (NLTHLSVSENNLQFLPEEIGSL), 566-588 (GLENLYINQNPGLEKLPFELALC), and 590-611 (NLKYLNIDKCPLSTIPPEIQAG).

It belongs to the SHOC2 family.

Functionally, acts as a Ras effector and participates in MAPK pathway activation. Probably acts as a regulatory subunit of protein phosphatase that specifically dephosphorylates Raf kinase and stimulate Raf activity at specialized signaling complexes upon Ras activation. The sequence is that of Leucine-rich repeat protein soc-2 homolog (Sur-8) from Drosophila pseudoobscura pseudoobscura (Fruit fly).